A 379-amino-acid polypeptide reads, in one-letter code: Alcohol dehydrogenase 1 (379 aa).

Residues C47, T49, H69, C99, C102, C105, C113, and C177 each contribute to the Zn(2+) site. 2 residues coordinate an alcohol: T49 and H69. T49 serves as a coordination point for NAD(+). NAD(+) is bound by residues 202–207 (GLGAVG), D226, R231, T272, V295, 295–297 (VGV), F322, and R372.

Belongs to the zinc-containing alcohol dehydrogenase family. As to quaternary structure, homodimer. The cofactor is Zn(2+).

It is found in the cytoplasm. The catalysed reaction is a primary alcohol + NAD(+) = an aldehyde + NADH + H(+). It carries out the reaction a secondary alcohol + NAD(+) = a ketone + NADH + H(+). The polypeptide is Alcohol dehydrogenase 1 (ADH1) (Hordeum vulgare (Barley)).